A 203-amino-acid polypeptide reads, in one-letter code: Large ribosomal subunit protein bL25 (203 aa).

Positions 1-21 (MMENLQVNQREKKTRHSSRQC) are disordered. Residues 12-21 (KKTRHSSRQC) show a composition bias toward basic residues.

Belongs to the bacterial ribosomal protein bL25 family. CTC subfamily. As to quaternary structure, part of the 50S ribosomal subunit; part of the 5S rRNA/L5/L18/L25 subcomplex. Contacts the 5S rRNA. Binds to the 5S rRNA independently of L5 and L18.

Its function is as follows. This is one of the proteins that binds to the 5S RNA in the ribosome where it forms part of the central protuberance. The polypeptide is Large ribosomal subunit protein bL25 (Clostridium perfringens (strain 13 / Type A)).